A 593-amino-acid chain; its full sequence is Aspartate--tRNA ligase (593 aa).

An L-aspartate-binding site is contributed by glutamate 180. The interval 204-207 (QIFK) is aspartate. L-aspartate is bound at residue arginine 226. ATP is bound by residues 226-228 (RDE) and glutamine 235. An L-aspartate-binding site is contributed by histidine 453. Position 487 (glutamate 487) interacts with ATP. Arginine 494 contacts L-aspartate. 539-542 (GLDR) lines the ATP pocket.

This sequence belongs to the class-II aminoacyl-tRNA synthetase family. Type 1 subfamily. As to quaternary structure, homodimer.

The protein localises to the cytoplasm. It catalyses the reaction tRNA(Asp) + L-aspartate + ATP = L-aspartyl-tRNA(Asp) + AMP + diphosphate. In terms of biological role, catalyzes the attachment of L-aspartate to tRNA(Asp) in a two-step reaction: L-aspartate is first activated by ATP to form Asp-AMP and then transferred to the acceptor end of tRNA(Asp). This chain is Aspartate--tRNA ligase, found in Clostridium botulinum (strain 657 / Type Ba4).